The following is a 149-amino-acid chain: Deoxyuridine 5'-triphosphate nucleotidohydrolase (149 aa).

Substrate is bound by residues R68–G70, N81, T85–D87, and K95.

Belongs to the dUTPase family. Mg(2+) serves as cofactor.

The catalysed reaction is dUTP + H2O = dUMP + diphosphate + H(+). It participates in pyrimidine metabolism; dUMP biosynthesis; dUMP from dCTP (dUTP route): step 2/2. Its function is as follows. This enzyme is involved in nucleotide metabolism: it produces dUMP, the immediate precursor of thymidine nucleotides and it decreases the intracellular concentration of dUTP so that uracil cannot be incorporated into DNA. In Wolinella succinogenes (strain ATCC 29543 / DSM 1740 / CCUG 13145 / JCM 31913 / LMG 7466 / NCTC 11488 / FDC 602W) (Vibrio succinogenes), this protein is Deoxyuridine 5'-triphosphate nucleotidohydrolase.